A 1165-amino-acid polypeptide reads, in one-letter code: Chromosome partition protein Smc (1165 aa).

32-39 contacts ATP; the sequence is PNGSGKSN. A coiled-coil region spans residues 161 to 503; the sequence is AGVAEFDRKI…ETQRQVWREA (343 aa). One can recognise an SMC hinge domain in the interval 518 to 630; sequence QGVHGLISQL…VFRSLELARR (113 aa). 2 coiled-coil regions span residues 672–901 and 946–1010; these read ELAE…LQQR and DLSL…DCDT.

The protein belongs to the SMC family. As to quaternary structure, homodimer.

It is found in the cytoplasm. Required for chromosome condensation and partitioning. This is Chromosome partition protein Smc from Gloeobacter violaceus (strain ATCC 29082 / PCC 7421).